The chain runs to 502 residues: CDP-diacylglycerol--glycerol-3-phosphate 3-phosphatidyltransferase (502 aa).

Residue 58 to 65 participates in ATP binding; sequence STLYIGKE. 2 PLD phosphodiesterase domains span residues 143-169 and 410-443; these read GWGLQHMKIYGADDNLIISGANLSRDY and KGNTYHAKGFWLSTQHHKHPFLTTIGSSNYTSRS. Catalysis depends on residues histidine 148, lysine 150, and aspartate 155.

The protein belongs to the CDP-alcohol phosphatidyltransferase class-II family.

The protein resides in the mitochondrion. It carries out the reaction a CDP-1,2-diacyl-sn-glycerol + sn-glycerol 3-phosphate = a 1,2-diacyl-sn-glycero-3-phospho-(1'-sn-glycero-3'-phosphate) + CMP + H(+). It participates in phospholipid metabolism; phosphatidylglycerol biosynthesis; phosphatidylglycerol from CDP-diacylglycerol: step 1/2. In terms of biological role, functions in the biosynthesis of the anionic phospholipids phosphatidylglycerol and cardiolipin. The sequence is that of CDP-diacylglycerol--glycerol-3-phosphate 3-phosphatidyltransferase (pgs1) from Schizosaccharomyces pombe (strain 972 / ATCC 24843) (Fission yeast).